The primary structure comprises 640 residues: MGQVLSKDNEDEANLNVTQKQFTKDKVLEYFNIQNHLQFRPVEIRAITSKLGIKNIKEKSDVTLNDLIYLLKIIKDEDIEGIDHNIKHVLNILSNSFTVIGNFPFLQSETTPKLSIESLMKSALFHTGRYKRLLTAEYDYLKLVFISLSGINKTYLEEKTSSSPSSSDDKEDTLYNLDVMGFSSEDEDSILSRKIKWNTFNVIQSFDDIDLDSIYVGAYDLLKLLTFFLILSSVPEMSHTQMQDHLSKSIARWSEFETYCLSIIRYINLDINVKNIKSTKISYEEFKRGISNGFPLFFSNAWMKIFKNGILSSISTTDVANSNNAPGSHGDANDNEVPKVHKKTPNFVESKLINDASISVISMCLKNMKSNLSITTQNLIKLYAGSESGFSIRSLESKIFKWQAPTLLLVSGKRVKNKTMKHNNRYIQFNEMYPSYFRSSESPKKDWQDDNDKMTYAVIINSPWKNSNKNNFGDEDTVILNLSPRFDFYKSVHNPVLNGKSIYFNNLGMGLGFGNSQPINKNTVKKFLPGDISLTIEANLEFAIFRHISSPNSNGASFFQKSKQNEISVQDFEDRFMISDLEVWGIGSTKELEEQRKQWAWEEKQAEARQSVNLRGLGEERAFLEMVGLVGNHSANGGSM.

The TLDc domain maps to 351 to 587 (KLINDASISV…ISDLEVWGIG (237 aa)).

Belongs to the RTC5 family.

The protein localises to the cytoplasm. May be involved in a process influencing telomere capping. This is Restriction of telomere capping protein 5 (RTC5) from Debaryomyces hansenii (strain ATCC 36239 / CBS 767 / BCRC 21394 / JCM 1990 / NBRC 0083 / IGC 2968) (Yeast).